The chain runs to 508 residues: MKLAYWMYAGPAHIGTLRIASSFKNVHAIMHAPLGDDYFNVMRSMLERERDFTPVTASIVDRNVLARGSQEKVVNNIVRKDGEERPDLIVLTPTCTSSILQEDLANFVERAQMDAQGDVLLADVNHYRYNELQAADRTLHQIVKFYLEKARKKEQLPQGKTENPSVNIIGISTLGFHNQHDCRELKQLMKDLGIEVNEVIPDGASVHNLKNLPKAWFNLVPYRELGLTTAQYLEEEFNLPYVDITPMGVVETARCIRKIQQIINEQGTNVDYEEYINNQTLYVSQAAWFSRSIDCQNLTGKKAVVFGDNTHAAAITKILAREMGIHVVLAGTYCKYDADWFKEQVSEYCDEVLISDDNGEIGDAIARIEPSAIFGTQMERHVGKRLDIPCGVIAAPIHIQNFPIGYKPFCGYEGTNQIADLVYNSFTLGMEDHLLEIFGGHDTKEVITKGISADSDLNWNKEAQAELNKVPGFVRGKVKRNTEKFARERGFSEISLEVMYAAKEAVGA.

Residue aspartate 36 participates in [4Fe-4S] cluster binding. The Proton donor role is filled by aspartate 294. Glycine 429–methionine 430 serves as a coordination point for substrate.

Belongs to the ChlB/BchB/BchZ family. As to quaternary structure, protochlorophyllide reductase is composed of three subunits; ChlL, ChlN and ChlB. Forms a heterotetramer of two ChlB and two ChlN subunits. Requires [4Fe-4S] cluster as cofactor.

The enzyme catalyses chlorophyllide a + oxidized 2[4Fe-4S]-[ferredoxin] + 2 ADP + 2 phosphate = protochlorophyllide a + reduced 2[4Fe-4S]-[ferredoxin] + 2 ATP + 2 H2O. Its pathway is porphyrin-containing compound metabolism; chlorophyll biosynthesis (light-independent). Functionally, component of the dark-operative protochlorophyllide reductase (DPOR) that uses Mg-ATP and reduced ferredoxin to reduce ring D of protochlorophyllide (Pchlide) to form chlorophyllide a (Chlide). This reaction is light-independent. The NB-protein (ChlN-ChlB) is the catalytic component of the complex. This is Light-independent protochlorophyllide reductase subunit B from Crocosphaera subtropica (strain ATCC 51142 / BH68) (Cyanothece sp. (strain ATCC 51142)).